A 603-amino-acid polypeptide reads, in one-letter code: MLETESSVCDNIAGNEKWRAEAEIGGNERALQALRELIIFPFRYPLEARTLGLKWPRGLLLYGPPGTGKTSLVRAVVQECDAHLIVLSPHSVHRAHAGESEKVLREAFAEASSHAVSDKPSVIFIDEIDVLCPRRDARREQDVRIASQLFTLMDSNKPSSSAPRVVVVASTNRVDAIDPALRRAGRFDALVEVSTPNEEDRLKILQLYTKKVNLDPSVDLQAIAISCNGYVGADLEALCREATISASKRSSDSLILTSQDFKIAKSVVGPSINRGITVEIPKVTWDDVGGLKDLKKKLQQAVEWPIKHSAAFVKMGISPMRGILLHGPPGCSKTTLAKAAANAAQASFFSLSCAELFSMYVGEGEALLRNTFQRARLASPSIIFFDEADVVACKRGDESSSNSSTVGERLLSTLLTEMDGLEEAKGILVLAATNRPYAIDAALMRPGRFDLVLYVPPPDLEARFEILQVHTRNMTLGDDVDLRKIAEETDLFTGAELEGLCRESGTVSLRENIAATAVFNRHFQTAKSSLKPALTIEEVETYSSFRKAAKRSDSKPIPINKKKATSTVFGFSWQLGVLSLLLLATGNYYFNHTKHELLVASAT.

ATP contacts are provided by residues 63 to 70 (GPPGTGKT) and 327 to 334 (GPPGCSKT).

The protein belongs to the AAA ATPase family.

It is found in the nucleus. Its subcellular location is the cytoplasm. It localises to the cytoskeleton. The protein resides in the phragmoplast. Its function is as follows. Probably functions in cell division and growth processes. Interacts with certain SNAREs as part of specialized membrane fusion events where vesicles from the same organelle fuse (homotypic fusion). This is Cell division control protein 48 homolog B (CDC48B) from Arabidopsis thaliana (Mouse-ear cress).